The sequence spans 62 residues: MTQNPKKIKVTLVKSLIGTKQAHRATARGLGLRHVNSSVEVEDTPAVRGMINNIYYLVKSEV.

Belongs to the universal ribosomal protein uL30 family. As to quaternary structure, part of the 50S ribosomal subunit.

The protein is Large ribosomal subunit protein uL30 of Nitrosospira multiformis (strain ATCC 25196 / NCIMB 11849 / C 71).